Consider the following 414-residue polypeptide: NADH-ubiquinone oxidoreductase chain 4 (414 aa).

A run of 10 helical transmembrane segments spans residues 18 to 38 (LVQL…MIGV), 47 to 67 (IAAF…LMSI), 96 to 116 (IIFI…PLHL), 126 to 146 (PTAG…YGYI), 160 to 180 (YFPI…IATL), 188 to 208 (IVAY…FSGV), 216 to 236 (IILM…IGVI), 254 to 274 (MMPI…AFPI), 293 to 313 (IIIA…SFWL), and 375 to 395 (VNIF…IVGM).

It belongs to the complex I subunit 4 family.

Its subcellular location is the mitochondrion membrane. It catalyses the reaction a ubiquinone + NADH + 5 H(+)(in) = a ubiquinol + NAD(+) + 4 H(+)(out). Its function is as follows. Core subunit of the mitochondrial membrane respiratory chain NADH dehydrogenase (Complex I) that is believed to belong to the minimal assembly required for catalysis. Complex I functions in the transfer of electrons from NADH to the respiratory chain. The immediate electron acceptor for the enzyme is believed to be ubiquinone. The chain is NADH-ubiquinone oxidoreductase chain 4 (nad4) from Dictyostelium citrinum (Slime mold).